The following is a 187-amino-acid chain: Orotate phosphoribosyltransferase (187 aa).

5-phospho-alpha-D-ribose 1-diphosphate is bound at residue 110-118; it reads EDVVTTGGS. Orotate-binding residues include threonine 114 and arginine 142.

Belongs to the purine/pyrimidine phosphoribosyltransferase family. PyrE subfamily. In terms of assembly, homodimer. The cofactor is Mg(2+).

It catalyses the reaction orotidine 5'-phosphate + diphosphate = orotate + 5-phospho-alpha-D-ribose 1-diphosphate. The protein operates within pyrimidine metabolism; UMP biosynthesis via de novo pathway; UMP from orotate: step 1/2. Its function is as follows. Catalyzes the transfer of a ribosyl phosphate group from 5-phosphoribose 1-diphosphate to orotate, leading to the formation of orotidine monophosphate (OMP). The chain is Orotate phosphoribosyltransferase from Thermotoga neapolitana (strain ATCC 49049 / DSM 4359 / NBRC 107923 / NS-E).